A 150-amino-acid chain; its full sequence is MNVILLDKIANLGSLGDQVSVKSGYARNFLFPQGKAVPATKSNVDLFEQRRAEYEAKLADQLAAAQARAEKVNALDAVTIASKAGDEGKLFGSIGTRDIADAVTAAGVEVKKSEVLMPHGTLREVGEFDIELHLHADVFANITLKVVPAE.

This sequence belongs to the bacterial ribosomal protein bL9 family.

Binds to the 23S rRNA. The polypeptide is Large ribosomal subunit protein bL9 (Idiomarina loihiensis (strain ATCC BAA-735 / DSM 15497 / L2-TR)).